Reading from the N-terminus, the 93-residue chain is Integration host factor subunit beta (93 aa).

This sequence belongs to the bacterial histone-like protein family. In terms of assembly, heterodimer of an alpha and a beta chain.

This protein is one of the two subunits of integration host factor, a specific DNA-binding protein that functions in genetic recombination as well as in transcriptional and translational control. The chain is Integration host factor subunit beta from Actinobacillus pleuropneumoniae serotype 7 (strain AP76).